Reading from the N-terminus, the 90-residue chain is UPF0223 protein lwe1035 (90 aa).

The protein belongs to the UPF0223 family.

This chain is UPF0223 protein lwe1035, found in Listeria welshimeri serovar 6b (strain ATCC 35897 / DSM 20650 / CCUG 15529 / CIP 8149 / NCTC 11857 / SLCC 5334 / V8).